The following is a 976-amino-acid chain: DNA-directed RNA polymerase 1, mitochondrial (976 aa).

The N-terminal 42 residues, 1–42 (MWRNILGRASLRKVKFLSDSSSSGTHYPVNRVRGILSSVNLS), are a transit peptide targeting the mitochondrion. Catalysis depends on residues Asp-677, Lys-752, and Asp-909.

The protein belongs to the phage and mitochondrial RNA polymerase family.

Its subcellular location is the mitochondrion. The enzyme catalyses RNA(n) + a ribonucleoside 5'-triphosphate = RNA(n+1) + diphosphate. In terms of biological role, DNA-dependent RNA polymerase catalyzes the transcription of DNA into RNA using the four ribonucleoside triphosphates as substrates. This Arabidopsis thaliana (Mouse-ear cress) protein is DNA-directed RNA polymerase 1, mitochondrial (RPOT1).